Reading from the N-terminus, the 118-residue chain is Co-chaperonin GroES (118 aa).

Belongs to the GroES chaperonin family. Heptamer of 7 subunits arranged in a ring. Interacts with the chaperonin GroEL.

Its subcellular location is the cytoplasm. Together with the chaperonin GroEL, plays an essential role in assisting protein folding. The GroEL-GroES system forms a nano-cage that allows encapsulation of the non-native substrate proteins and provides a physical environment optimized to promote and accelerate protein folding. GroES binds to the apical surface of the GroEL ring, thereby capping the opening of the GroEL channel. In Helicobacter pylori (strain Shi470), this protein is Co-chaperonin GroES.